A 568-amino-acid polypeptide reads, in one-letter code: Glycine--tRNA ligase (568 aa).

Arginine 97 and glutamate 163 together coordinate substrate. Residues 195–197 (RNE), 205–210 (IRLREF), 322–323 (EC), and 441–444 (GIDR) each bind ATP. 210-214 (FTQAE) contacts substrate. 437–441 (EPSFG) is a substrate binding site.

This sequence belongs to the class-II aminoacyl-tRNA synthetase family.

The protein localises to the cytoplasm. It catalyses the reaction tRNA(Gly) + glycine + ATP = glycyl-tRNA(Gly) + AMP + diphosphate. Its function is as follows. Catalyzes the attachment of glycine to tRNA(Gly). The polypeptide is Glycine--tRNA ligase (Pyrococcus furiosus (strain ATCC 43587 / DSM 3638 / JCM 8422 / Vc1)).